The chain runs to 290 residues: 4-diphosphocytidyl-2-C-methyl-D-erythritol kinase (290 aa).

Lys-13 is a catalytic residue. 96–106 is a binding site for ATP; that stretch reads PMGGGIGGGSS. Residue Asp-138 is part of the active site.

The protein belongs to the GHMP kinase family. IspE subfamily.

The enzyme catalyses 4-CDP-2-C-methyl-D-erythritol + ATP = 4-CDP-2-C-methyl-D-erythritol 2-phosphate + ADP + H(+). It participates in isoprenoid biosynthesis; isopentenyl diphosphate biosynthesis via DXP pathway; isopentenyl diphosphate from 1-deoxy-D-xylulose 5-phosphate: step 3/6. Its function is as follows. Catalyzes the phosphorylation of the position 2 hydroxy group of 4-diphosphocytidyl-2C-methyl-D-erythritol. In Vibrio cholerae serotype O1 (strain ATCC 39541 / Classical Ogawa 395 / O395), this protein is 4-diphosphocytidyl-2-C-methyl-D-erythritol kinase.